Reading from the N-terminus, the 41-residue chain is Photosystem II reaction center protein L (41 aa).

Residues 20–40 (SLYWGLLLIFVLAVPFSNYFF) form a helical membrane-spanning segment.

It belongs to the PsbL family. PSII is composed of 1 copy each of membrane proteins PsbA, PsbB, PsbC, PsbD, PsbE, PsbF, PsbH, PsbI, PsbJ, PsbK, PsbL, PsbM, PsbT, PsbX, PsbY, PsbZ, Psb30/Ycf12, at least 3 peripheral proteins of the oxygen-evolving complex and a large number of cofactors. It forms dimeric complexes.

It localises to the plastid. The protein resides in the chloroplast thylakoid membrane. Its function is as follows. One of the components of the core complex of photosystem II (PSII). PSII is a light-driven water:plastoquinone oxidoreductase that uses light energy to abstract electrons from H(2)O, generating O(2) and a proton gradient subsequently used for ATP formation. It consists of a core antenna complex that captures photons, and an electron transfer chain that converts photonic excitation into a charge separation. This subunit is found at the monomer-monomer interface and is required for correct PSII assembly and/or dimerization. In Pinus koraiensis (Korean pine), this protein is Photosystem II reaction center protein L.